The primary structure comprises 166 residues: Putative 4-hydroxy-4-methyl-2-oxoglutarate aldolase 1 (166 aa).

N-acetylalanine is present on Ala2. Substrate-binding positions include 81–84 (GGNP) and Arg103. Asp104 contacts a divalent metal cation.

It belongs to the class II aldolase/RraA-like family. As to quaternary structure, homotrimer. A divalent metal cation is required as a cofactor.

It catalyses the reaction 4-hydroxy-4-methyl-2-oxoglutarate = 2 pyruvate. The catalysed reaction is oxaloacetate + H(+) = pyruvate + CO2. In terms of biological role, catalyzes the aldol cleavage of 4-hydroxy-4-methyl-2-oxoglutarate (HMG) into 2 molecules of pyruvate. Also contains a secondary oxaloacetate (OAA) decarboxylase activity due to the common pyruvate enolate transition state formed following C-C bond cleavage in the retro-aldol and decarboxylation reactions. The chain is Putative 4-hydroxy-4-methyl-2-oxoglutarate aldolase 1 from Arabidopsis thaliana (Mouse-ear cress).